We begin with the raw amino-acid sequence, 133 residues long: Large ribosomal subunit protein uL22 (133 aa).

It belongs to the universal ribosomal protein uL22 family. Part of the 50S ribosomal subunit.

Functionally, this protein binds specifically to 23S rRNA; its binding is stimulated by other ribosomal proteins, e.g. L4, L17, and L20. It is important during the early stages of 50S assembly. It makes multiple contacts with different domains of the 23S rRNA in the assembled 50S subunit and ribosome. Its function is as follows. The globular domain of the protein is located near the polypeptide exit tunnel on the outside of the subunit, while an extended beta-hairpin is found that lines the wall of the exit tunnel in the center of the 70S ribosome. The chain is Large ribosomal subunit protein uL22 from Aquifex pyrophilus.